Reading from the N-terminus, the 629-residue chain is tRNA uridine 5-carboxymethylaminomethyl modification enzyme MnmG (629 aa).

FAD is bound by residues 14–19, Val-126, and Ser-181; that span reads GAGHAG. An NAD(+)-binding site is contributed by 273-287; sequence GPRYCPSIEDKVVRF. Position 370 (Gln-370) interacts with FAD.

The protein belongs to the MnmG family. In terms of assembly, homodimer. Heterotetramer of two MnmE and two MnmG subunits. FAD is required as a cofactor.

The protein resides in the cytoplasm. Functionally, NAD-binding protein involved in the addition of a carboxymethylaminomethyl (cmnm) group at the wobble position (U34) of certain tRNAs, forming tRNA-cmnm(5)s(2)U34. This Bacillus cereus (strain ATCC 10987 / NRS 248) protein is tRNA uridine 5-carboxymethylaminomethyl modification enzyme MnmG.